The chain runs to 405 residues: Zinc finger protein ubi-d4 (405 aa).

Disordered stretches follow at residues 80–147, 165–194, 210–230, and 248–280; these read RKKR…GEFP, DDLD…GGAR, ACDN…VCGK, and AEEE…PDGL. 2 stretches are compositionally biased toward basic and acidic residues: residues 100–110 and 126–140; these read PDTDQTLKKEG and DPLE…RMDD. A compositionally biased stretch (acidic residues) spans 165–174; that stretch reads DDLDDEDYEE. The C2H2-type; atypical zinc finger occupies 209-246; it reads YACDNSYKQKHSLKPPDRVCGKRYKNRPGLSYHYAHSH. A compositionally biased stretch (basic and acidic residues) spans 267–277; the sequence is RSEEQKSKKGP. 2 consecutive PHD-type zinc fingers follow at residues 284-344 and 341-391; these read NNYC…CKCC and CKCC…CLDL.

This sequence belongs to the requiem/DPF family.

It is found in the cytoplasm. Its subcellular location is the nucleus. May be a transcription factor required for the apoptosis response following survival factor withdrawal from myeloid cells. Might also have a role in the development and maturation of lymphoid cells. The protein is Zinc finger protein ubi-d4 (REQ) of Gallus gallus (Chicken).